A 306-amino-acid chain; its full sequence is 5'-hydroxyaverantin dehydrogenase (306 aa).

Residues S25, I27, Q48, K52, and D73 each contribute to the NADP(+) site. Catalysis depends on S173, which acts as the Proton donor. The NADP(+) site is built by Y187, K191, V220, and T222. The active-site Proton acceptor is Y187. The active-site Lowers pKa of active site Tyr is the K191.

Belongs to the short-chain dehydrogenases/reductases (SDR) family. As to quaternary structure, homodimer.

It localises to the cytoplasm. Its subcellular location is the cytosol. It catalyses the reaction (1'S,5'S)-5'-hydroxyaverantin + NAD(+) = (S)-5'-oxoaverantin + NADH + H(+). It carries out the reaction (1'S,5'R)-5'-hydroxyaverantin + NAD(+) = (S)-5'-oxoaverantin + NADH + 2 H(+). It functions in the pathway mycotoxin biosynthesis. In terms of biological role, 5'-hydroxyaverantin dehydrogenase; part of the fragmented gene cluster that mediates the biosynthesis of dothistromin (DOTH), a polyketide toxin very similar in structure to the aflatoxin precursor, versicolorin B. The first step of the pathway is the conversion of acetate to norsolorinic acid (NOR) and requires the fatty acid synthase subunits hexA and hexB, as well as the polyketide synthase pksA. PksA combines a hexanoyl starter unit and 7 malonyl-CoA extender units to synthesize the precursor NOR. The hexanoyl starter unit is provided to the acyl-carrier protein (ACP) domain by the fungal fatty acid synthase hexA/hexB. The second step is the conversion of NOR to averantin (AVN) and requires the norsolorinic acid ketoreductase nor1, which catalyzes the dehydration of norsolorinic acid to form (1'S)-averantin. The cytochrome P450 monooxygenase avnA then catalyzes the hydroxylation of AVN to 5'hydroxyaverantin (HAVN). The next step is performed by adhA that transforms HAVN to averufin (AVF). Averufin might then be converted to hydroxyversicolorone by cypX and avfA. Hydroxyversicolorone is further converted versiconal hemiacetal acetate (VHA) by moxY. VHA is then the substrate for the versiconal hemiacetal acetate esterase est1 to yield versiconal (VAL). Versicolorin B synthase vbsA then converts VAL to versicolorin B (VERB) by closing the bisfuran ring. Then, the activity of the versicolorin B desaturase verB leads to versicolorin A (VERA). DotB, a predicted chloroperoxidase, may perform epoxidation of the A-ring of VERA. Alternatively, a cytochrome P450, such as cypX or avnA could catalyze this step. It is also possible that another, uncharacterized, cytochrome P450 enzyme is responsible for this step. Opening of the epoxide could potentially be achieved by the epoxide hydrolase epoA. However, epoA seems not to be required for DOTH biosynthesis, but other epoxide hydrolases may have the ability to complement this hydrolysis. Alternatively, opening of the epoxide ring could be achieved non-enzymatically. The next step is the deoxygenation of ring A to yield the 5,8-dihydroxyanthraquinone which is most likely catalyzed by the NADPH dehydrogenase encoded by ver1. The last stages of DOTH biosynthesis are proposed to involve hydroxylation of the bisfuran. OrdB and norB might have oxidative roles here. An alternative possibility is that cytochrome P450 monoogenases such as avnA and cypX might perform these steps in addition to previously proposed steps. The protein is 5'-hydroxyaverantin dehydrogenase of Dothistroma septosporum (strain NZE10 / CBS 128990) (Red band needle blight fungus).